A 539-amino-acid polypeptide reads, in one-letter code: GMP synthase [glutamine-hydrolyzing] (539 aa).

The Glutamine amidotransferase type-1 domain occupies 4 to 202 (KILILDFGSQ…VLQIAGAKPD (199 aa)). The Nucleophile role is filled by Cys81. Residues His176 and Glu178 contribute to the active site. The GMPS ATP-PPase domain maps to 203–395 (WIMSNHIEEA…LGLPPEMVYR (193 aa)). 230-236 (SGGVDSS) is an ATP binding site.

As to quaternary structure, homodimer.

It catalyses the reaction XMP + L-glutamine + ATP + H2O = GMP + L-glutamate + AMP + diphosphate + 2 H(+). It participates in purine metabolism; GMP biosynthesis; GMP from XMP (L-Gln route): step 1/1. Functionally, catalyzes the synthesis of GMP from XMP. This chain is GMP synthase [glutamine-hydrolyzing], found in Burkholderia ambifaria (strain MC40-6).